The following is a 122-amino-acid chain: Large ribosomal subunit protein bL12 (122 aa).

This sequence belongs to the bacterial ribosomal protein bL12 family. Homodimer. Part of the ribosomal stalk of the 50S ribosomal subunit. Forms a multimeric L10(L12)X complex, where L10 forms an elongated spine to which 2 to 4 L12 dimers bind in a sequential fashion. Binds GTP-bound translation factors.

In terms of biological role, forms part of the ribosomal stalk which helps the ribosome interact with GTP-bound translation factors. Is thus essential for accurate translation. The polypeptide is Large ribosomal subunit protein bL12 (Xanthomonas oryzae pv. oryzae (strain MAFF 311018)).